Reading from the N-terminus, the 220-residue chain is PKHD-type hydroxylase PCC7424_1929 (220 aa).

The region spanning 77-173 is the Fe2OG dioxygenase domain; it reads KIHSLLFSRY…RLVAVGWVQS (97 aa). Fe cation contacts are provided by H95, D97, and H154. R164 contributes to the 2-oxoglutarate binding site.

The cofactor is Fe(2+). L-ascorbate serves as cofactor.

The polypeptide is PKHD-type hydroxylase PCC7424_1929 (Gloeothece citriformis (strain PCC 7424) (Cyanothece sp. (strain PCC 7424))).